We begin with the raw amino-acid sequence, 196 residues long: Na(+)-translocating ferredoxin:NAD(+) oxidoreductase complex subunit E (196 aa).

5 helical membrane passes run 38 to 58 (MGMGLATMLVLIGSNVAISAL), 68 to 88 (IPAFVVVIASFVTIVGMLMKA), 92 to 112 (ALDAALGIFIPLIVVNCIILA), 127 to 147 (FADAVGMGLGFTLALTILGSI), and 169 to 189 (VLLMILPPGAFLTLGLLIGLI).

This sequence belongs to the NqrDE/RnfAE family. In terms of assembly, the complex is composed of six subunits: RnfA, RnfB, RnfC, RnfD, RnfE and RnfG.

It is found in the cell membrane. The catalysed reaction is 2 reduced [2Fe-2S]-[ferredoxin] + Na(+)(in) + NAD(+) + H(+) = 2 oxidized [2Fe-2S]-[ferredoxin] + Na(+)(out) + NADH. In terms of biological role, part of a membrane-bound complex that couples electron transfer with translocation of ions across the membrane. Couples electron transfer from reduced ferredoxin to NAD(+) with electrogenic movement of Na(+) out of the cell. Involved in caffeate respiration. The sequence is that of Na(+)-translocating ferredoxin:NAD(+) oxidoreductase complex subunit E from Acetobacterium woodii (strain ATCC 29683 / DSM 1030 / JCM 2381 / KCTC 1655 / WB1).